The following is a 383-amino-acid chain: Oxysterol-binding protein-related protein 4B (383 aa).

Belongs to the OSBP family. In terms of tissue distribution, expressed in stems and flowers.

Its function is as follows. May be involved in the transport of sterols. The sequence is that of Oxysterol-binding protein-related protein 4B (ORP4B) from Arabidopsis thaliana (Mouse-ear cress).